The following is a 306-amino-acid chain: Polyadenylate-binding protein 2 (306 aa).

Positions 1-12 are enriched in low complexity; it reads MAAAAAAAAAAG. Residues 1–115 are disordered; it reads MAAAAAAAAA…EGDPGDGAIE (115 aa). A2 carries the N-acetylalanine modification. The interval 2–145 is interaction with SKIP; that stretch reads AAAAAAAAAA…LKELQNEVEK (144 aa). Position 17 is an omega-N-methylarginine (R17). S19 bears the Phosphoserine mark. Over residues 30–47 the composition is skewed to gly residues; the sequence is GAGGEAGEGAPGGAGDYG. Acidic residues predominate over residues 51 to 72; it reads ESEELEPEELLLEPEPEPEPEE. S52 carries the phosphoserine modification. Residues 77–87 show a composition bias toward pro residues; the sequence is PRAPPGAPGPG. A coiled-coil region spans residues 115 to 151; it reads EDPELEAIKARVREMEEEAEKLKELQNEVEKQMNMSP. The stimulates PAPOLA stretch occupies residues 119–147; the sequence is LEAIKARVREMEEEAEKLKELQNEVEKQM. S150 and S235 each carry phosphoserine. Residues 155-306 form a necessary for homooligomerization region; that stretch reads NAGPVIMSIE…ARATSWYSPY (152 aa). The 78-residue stretch at 172–249 folds into the RRM domain; sequence RSIYVGNVDY…RQIKVIPKRT (78 aa). An asymmetric dimethylarginine; alternate mark is found at R238, R259, and R263. R238, R259, and R263 each carry omega-N-methylarginine; alternate. 11 positions are modified to asymmetric dimethylarginine: R265, R267, R269, R277, R279, R287, R289, R291, R294, R296, and R298. Residues 286 to 306 form an interaction with PAPOLA region; the sequence is SRPRGRVYRGRARATSWYSPY.

In terms of assembly, monomer and homooligomer. Binds RNA as a monomer and oligomerizes when bound to poly(A). Associates in a ternary complex with CPSF4 and NS/NS1 and interaction with NS/NS1, blocks nuclear export of host cell mRNAs. Associates in a single complex with SKIP and MYOD1 and interacts with SKIP in differentiated myocytes. Interacts with NUDT21/CPSF5. Identified in a IGF2BP1-dependent mRNP granule complex containing untranslated mRNAs. Interacts with PAPOLA, but only in presence of oligo(A) RNA. Interacts with transportin. May interact with SETX. Interacts (via RRM domain and C-terminal arginine-rich region) with ZFP36 (via hypophosphorylated form); this interaction occurs in the nucleus in a RNA-independent manner, decreases in presence of single-stranded poly(A) RNA-oligomer and in a p38-dependent-manner and may down-regulated RNA poly(A) polymerase activity. Component of the poly(A) tail exosome targeting (PAXT) complex composed of PABPN1, ZFC3H1 and MTREX. Interacts with ZFC3H1 in a RNase-insensitive manner. Interacts with FRG1. Interacts with ZC3H11A. In terms of processing, arginine dimethylation is asymmetric and involves PRMT1 and PRMT3. It does not influence the RNA binding properties. Ubiquitous.

It is found in the nucleus. The protein localises to the cytoplasm. Its subcellular location is the nucleus speckle. Functionally, involved in the 3'-end formation of mRNA precursors (pre-mRNA) by the addition of a poly(A) tail of 200-250 nt to the upstream cleavage product. Stimulates poly(A) polymerase (PAPOLA) conferring processivity on the poly(A) tail elongation reaction and also controls the poly(A) tail length. Increases the affinity of poly(A) polymerase for RNA. Is also present at various stages of mRNA metabolism including nucleocytoplasmic trafficking and nonsense-mediated decay (NMD) of mRNA. Cooperates with SKIP to synergistically activate E-box-mediated transcription through MYOD1 and may regulate the expression of muscle-specific genes. Binds to poly(A) and to poly(G) with high affinity. May protect the poly(A) tail from degradation. Subunit of the trimeric poly(A) tail exosome targeting (PAXT) complex, a complex that directs a subset of long and polyadenylated poly(A) RNAs for exosomal degradation. The RNA exosome is fundamental for the degradation of RNA in eukaryotic nuclei. Substrate targeting is facilitated by its cofactor MTREX, which links to RNA-binding protein adapters. This is Polyadenylate-binding protein 2 (PABPN1) from Bos taurus (Bovine).